A 316-amino-acid chain; its full sequence is Probable cell division protein WhiA (316 aa).

Residues S280–T313 constitute a DNA-binding region (H-T-H motif).

The protein belongs to the WhiA family.

Involved in cell division and chromosome segregation. In Clostridium perfringens (strain 13 / Type A), this protein is Probable cell division protein WhiA.